A 364-amino-acid polypeptide reads, in one-letter code: Sec-independent protein translocase protein TatC (364 aa).

The next 7 membrane-spanning stretches (helical) occupy residues Ile42–Phe62, Met107–Thr127, Leu139–Thr159, Leu160–Asp180, Ile194–Val214, Pro225–Thr245, and Met246–Leu266. The tract at residues Thr277–Thr364 is disordered. Residues Asp282–Asp295 show a composition bias toward acidic residues. The span at Ala301–Gly320 shows a compositional bias: low complexity. A compositionally biased stretch (polar residues) spans Pro324–Pro344.

The protein belongs to the TatC family. As to quaternary structure, the Tat system comprises two distinct complexes: a TatABC complex, containing multiple copies of TatA, TatB and TatC subunits, and a separate TatA complex, containing only TatA subunits. Substrates initially bind to the TatABC complex, which probably triggers association of the separate TatA complex to form the active translocon.

The protein localises to the cell membrane. Functionally, part of the twin-arginine translocation (Tat) system that transports large folded proteins containing a characteristic twin-arginine motif in their signal peptide across membranes. Together with TatB, TatC is part of a receptor directly interacting with Tat signal peptides. The chain is Sec-independent protein translocase protein TatC from Frankia casuarinae (strain DSM 45818 / CECT 9043 / HFP020203 / CcI3).